Here is a 168-residue protein sequence, read N- to C-terminus: Large ribosomal subunit protein uL10 (168 aa).

It belongs to the universal ribosomal protein uL10 family. In terms of assembly, part of the ribosomal stalk of the 50S ribosomal subunit. The N-terminus interacts with L11 and the large rRNA to form the base of the stalk. The C-terminus forms an elongated spine to which L12 dimers bind in a sequential fashion forming a multimeric L10(L12)X complex.

Its function is as follows. Forms part of the ribosomal stalk, playing a central role in the interaction of the ribosome with GTP-bound translation factors. In Acinetobacter baumannii (strain AB307-0294), this protein is Large ribosomal subunit protein uL10.